Here is a 208-residue protein sequence, read N- to C-terminus: Uracil phosphoribosyltransferase (208 aa).

5-phospho-alpha-D-ribose 1-diphosphate is bound by residues R78, R103, and 130–138; that span reads DPMLATGGS. Uracil contacts are provided by residues I193 and 198–200; that span reads GDA. D199 provides a ligand contact to 5-phospho-alpha-D-ribose 1-diphosphate.

This sequence belongs to the UPRTase family. Mg(2+) is required as a cofactor.

It catalyses the reaction UMP + diphosphate = 5-phospho-alpha-D-ribose 1-diphosphate + uracil. It participates in pyrimidine metabolism; UMP biosynthesis via salvage pathway; UMP from uracil: step 1/1. With respect to regulation, allosterically activated by GTP. Catalyzes the conversion of uracil and 5-phospho-alpha-D-ribose 1-diphosphate (PRPP) to UMP and diphosphate. In Citrobacter koseri (strain ATCC BAA-895 / CDC 4225-83 / SGSC4696), this protein is Uracil phosphoribosyltransferase.